A 1807-amino-acid polypeptide reads, in one-letter code: Triacetic acid lactone synthase cle1 (1807 aa).

The Starter acyltransferase (SAT) domain maps to 107-280 (LAPLTVIIHI…ANVPVNGRYH (174 aa)). Positions 385–795 (DTSIAIIGAA…GNNTAIIICQ (411 aa)) constitute a Ketosynthase family 3 (KS3) domain. Residues Cys540, His675, and His718 each act as for beta-ketoacyl synthase activity in the active site. The region spanning 919–1176 (SKAVYDSSYH…LGPCIWLEAG (258 aa)) is the Malonyl-CoA:ACP transacylase (MAT) domain. The N-terminal hotdog fold stretch occupies residues 1272–1398 (PVIDGLISLE…GTVIVDDERT (127 aa)). The 302-residue stretch at 1272–1573 (PVIDGLISLE…FIRTSTSALQ (302 aa)) folds into the PKS/mFAS DH domain. His1304 serves as the catalytic Proton acceptor; for dehydratase activity. Residues 1416–1573 (TVFSAPRGVA…FIRTSTSALQ (158 aa)) form a C-terminal hotdog fold region. Residue Asp1475 is the Proton donor; for dehydratase activity of the active site. The 75-residue stretch at 1605–1679 (ANVWSLTVNL…IICERITAQT (75 aa)) folds into the Carrier 1 domain. Position 1639 is an O-(pantetheine 4'-phosphoryl)serine (Ser1639). The interval 1690 to 1720 (GNSTSNTTSSSSQCTPSSSFESDSDTQATEL) is disordered. Residues 1692-1710 (STSNTTSSSSQCTPSSSFE) show a composition bias toward low complexity. Residues 1721-1797 (SLSAPTMEKV…DLHALVMRRG (77 aa)) enclose the Carrier 2 domain. Ser1757 bears the O-(pantetheine 4'-phosphoryl)serine mark.

It depends on pantetheine 4'-phosphate as a cofactor.

It functions in the pathway secondary metabolite biosynthesis; terpenoid biosynthesis. Non-reducing polyketide synthase; part of the cluster A that mediates the biosynthesis of chevalone E and its oxidized derivatives that possess a unique five-membered lactone ring and can synergistically enhance the cytotoxicity of doxorubicin (DOX) in breast cancer cells. Within the pathway, cle1 takes part to the biosynthesis of the molecular scaffold via the synthesis the alpha-pyrone triacetic acid lactone (TAL) from one molecule of acetyl-CoA and two molecules of malonyl-CoA. The molecular scaffold is commonly biosynthesized by a series of enzymes including the non-reducing polyketide synthase (NR-PKS) cle1 that produces the alpha-pyrone triacetic acid lactone (TAL); The membrane-bound prenyltransferase cle5 that accepts TAL as its substrate to perform a C-3 geranylgeranylation reaction, in which the pathway-dedicated GGPS cle6 is required to provide GGPP, the other substrate of cle5; the FAD-dependent monooxygenase Cle3 that forms an (S)-epoxide ring at the terminal olefin of the geranylgeranyl group; and the terpene cyclase Cle7 that catalyzes the cyclization of the prenyl group that yields the pentacyclic pathway intermediate chevalone E. Chevalone E can derivatize into seven new oxidized analogs by the cytochrome P450 monooxygenases cle2 (acting at C-20) and cle4 (acting at C-11 and C-12). In Aspergillus versicolor, this protein is Triacetic acid lactone synthase cle1.